A 138-amino-acid polypeptide reads, in one-letter code: Nucleoside diphosphate kinase (138 aa).

ATP contacts are provided by K10, F58, R86, T92, R103, and N113. Residue H116 is the Pros-phosphohistidine intermediate of the active site.

This sequence belongs to the NDK family. In terms of assembly, homotetramer. The cofactor is Mg(2+).

The protein resides in the cytoplasm. The catalysed reaction is a 2'-deoxyribonucleoside 5'-diphosphate + ATP = a 2'-deoxyribonucleoside 5'-triphosphate + ADP. The enzyme catalyses a ribonucleoside 5'-diphosphate + ATP = a ribonucleoside 5'-triphosphate + ADP. In terms of biological role, major role in the synthesis of nucleoside triphosphates other than ATP. The ATP gamma phosphate is transferred to the NDP beta phosphate via a ping-pong mechanism, using a phosphorylated active-site intermediate. The sequence is that of Nucleoside diphosphate kinase from Actinobacillus pleuropneumoniae serotype 5b (strain L20).